The chain runs to 388 residues: Proteasomal ubiquitin receptor ADRM1 homolog rpn1302 (388 aa).

A Pru domain is found at 15–132; the sequence is RGKYGLVSVK…SLINQLIADP (118 aa). Disordered regions lie at residues 202–227 and 368–388; these read RASSESNLNGPHATAGENGEDHEEAT and SDGEVEEEGDVEMRESNEKDE. Residues 368 to 377 are compositionally biased toward acidic residues; the sequence is SDGEVEEEGD. The segment covering 378–388 has biased composition (basic and acidic residues); it reads VEMRESNEKDE.

The protein belongs to the ADRM1 family. As to quaternary structure, component of the 19S proteasome regulatory particle complex. The 2 S.pombe rpn13 homologs, rpn1301 and rpn1302 are present at a 0.2-1 ratio.

It localises to the cytoplasm. It is found in the nucleus. Functionally, component of the 26S proteasome, a multiprotein complex involved in the ATP-dependent degradation of ubiquitinated proteins. This complex plays a key role in the maintenance of protein homeostasis by removing misfolded or damaged proteins, which could impair cellular functions, and by removing proteins whose functions are no longer required. Therefore, the proteasome participates in numerous cellular processes, including cell cycle progression, apoptosis, or DNA damage repair. Within the complex, functions as a proteasomal ubiquitin receptor. The polypeptide is Proteasomal ubiquitin receptor ADRM1 homolog rpn1302 (rpn1302) (Schizosaccharomyces pombe (strain 972 / ATCC 24843) (Fission yeast)).